We begin with the raw amino-acid sequence, 401 residues long: MSIDINWDTLTGGADGAARAETIRAFIHDKFQQVTLPKFIRSVHVHSFDFGSASPEIEIKDICDPLPDFYEEDEDYPDNEDDDDDEAGLDSNPRNKCITRKGTNFKSVAISLVARQFETSHQSALTPGIPGGTSNINYFHLPLSAGLSGATTPLAAVAGAQLQGWLDNPYGRPSTPTNMRRLRHAASFNSLTLTPQSHPDPSSRPSSRHQHDDERRRSLAESDDASSQHGYDRTPSVSPHPMREKSPEDIQVVAHVQYSGDIKMSLTAEILLDYPMQSFVGIPLKLNITGLTFDGVALLAYIKRRAHFCFLSPDDAEALVGSDAGFNGLQTDSNGENAQPVQRPKIGGLLENIRVESEIGGQGSGKQVLKNVGKVESFVLEQVRRIFEDEFVYPSFWTFLV.

The SMP-LTD domain occupies 1–401; that stretch reads MSIDINWDTL…VYPSFWTFLV (401 aa). Positions 70-88 are enriched in acidic residues; sequence YEEDEDYPDNEDDDDDEAG. Disordered stretches follow at residues 70-95 and 190-247; these read YEED…NPRN and SLTL…EKSP. Over residues 195–205 the composition is skewed to low complexity; sequence PQSHPDPSSRP. Over residues 209–220 the composition is skewed to basic and acidic residues; it reads HQHDDERRRSLA.

Belongs to the MDM12 family. Component of the ER-mitochondria encounter structure (ERMES) or MDM complex, composed of MMM1, MDM10, MDM12 and MDM34. An MMM1 homodimer associates with one molecule of MDM12 on each side in a pairwise head-to-tail manner, and the SMP-LTD domains of MMM1 and MDM12 generate a continuous hydrophobic tunnel for phospholipid trafficking.

The protein resides in the mitochondrion outer membrane. It localises to the endoplasmic reticulum membrane. Functionally, component of the ERMES/MDM complex, which serves as a molecular tether to connect the endoplasmic reticulum (ER) and mitochondria. Components of this complex are involved in the control of mitochondrial shape and protein biogenesis, and function in nonvesicular lipid trafficking between the ER and mitochondria. MDM12 is required for the interaction of the ER-resident membrane protein MMM1 and the outer mitochondrial membrane-resident beta-barrel protein MDM10. The MDM12-MMM1 subcomplex functions in the major beta-barrel assembly pathway that is responsible for biogenesis of all mitochondrial outer membrane beta-barrel proteins, and acts in a late step after the SAM complex. The MDM10-MDM12-MMM1 subcomplex further acts in the TOM40-specific pathway after the action of the MDM12-MMM1 complex. Essential for establishing and maintaining the structure of mitochondria and maintenance of mtDNA nucleoids. The sequence is that of Mitochondrial distribution and morphology protein 12 from Phaeosphaeria nodorum (strain SN15 / ATCC MYA-4574 / FGSC 10173) (Glume blotch fungus).